Consider the following 466-residue polypeptide: Asparagine--tRNA ligase (466 aa).

Belongs to the class-II aminoacyl-tRNA synthetase family. In terms of assembly, homodimer.

The protein resides in the cytoplasm. The catalysed reaction is tRNA(Asn) + L-asparagine + ATP = L-asparaginyl-tRNA(Asn) + AMP + diphosphate + H(+). The polypeptide is Asparagine--tRNA ligase (Idiomarina loihiensis (strain ATCC BAA-735 / DSM 15497 / L2-TR)).